The sequence spans 248 residues: Small ribosomal subunit protein uS2 (248 aa).

The protein belongs to the universal ribosomal protein uS2 family.

This is Small ribosomal subunit protein uS2 from Dechloromonas aromatica (strain RCB).